Here is a 363-residue protein sequence, read N- to C-terminus: MEPTYEEYLANHGTIVKPYYWLSFSLDCSNCPYHIRTGEEARVSLTEFCQIFGFPYGTTYPQTKHLTFYELKTSSGSLVQKGHASSCTGNYIHPESMLFEMNGYLDSAIYNNDSIRHIILYCNNSPCNEANHCCISKVYNFLITYPGITLSIYFSQLYHTEMDFPASAWNREALRSLASLWPRVVLSPISGGIWHSVLHSFVSGVSGSHVFQPILTGRALTDRYNAYEINAITGVKPFFTDVLLHTKRNPNTKAQMALESYPLNNAFPGQSFQMTSGIPPDLRAPVVFVLLPLRDLPPMHMGQDPNKPRNIIRHLNMPQMSFQETKDLERLPTRRSVETVEITERFASSKQAEEKTKKKKGKK.

The 117-residue stretch at 61-177 (PQTKHLTFYE…AWNREALRSL (117 aa)) folds into the CMP/dCMP-type deaminase domain. His-93 contacts Zn(2+). Glu-95 serves as the catalytic Proton donor. 2 residues coordinate Zn(2+): Cys-127 and Cys-134.

The protein belongs to the cytidine and deoxycytidylate deaminase family. Zn(2+) is required as a cofactor.

In terms of biological role, putative C to U editing enzyme whose physiological substrate is not yet known. The chain is Putative C-&gt;U-editing enzyme APOBEC-4 (APOBEC4) from Macaca fascicularis (Crab-eating macaque).